Reading from the N-terminus, the 69-residue chain is Cytochrome c oxidase subunit 8A, mitochondrial (69 aa).

The transit peptide at 1–25 (MSVLTSLLLRGLTGSARRLPVPRAK) directs the protein to the mitochondrion. Residues 26-36 (VHSMPPEEELG) lie on the Mitochondrial matrix side of the membrane. The helical transmembrane segment at 37-60 (IMEKAIGLTFCFVSLFLPAGWILS) threads the bilayer. The Mitochondrial intermembrane portion of the chain corresponds to 61-69 (HLEDYKRPE).

This sequence belongs to the cytochrome c oxidase VIII family. In terms of assembly, component of the cytochrome c oxidase (complex IV, CIV), a multisubunit enzyme composed of 14 subunits. The complex is composed of a catalytic core of 3 subunits MT-CO1, MT-CO2 and MT-CO3, encoded in the mitochondrial DNA, and 11 supernumerary subunits COX4I, COX5A, COX5B, COX6A, COX6B, COX6C, COX7A, COX7B, COX7C, COX8 and NDUFA4, which are encoded in the nuclear genome. The complex exists as a monomer or a dimer and forms supercomplexes (SCs) in the inner mitochondrial membrane with NADH-ubiquinone oxidoreductase (complex I, CI) and ubiquinol-cytochrome c oxidoreductase (cytochrome b-c1 complex, complex III, CIII), resulting in different assemblies (supercomplex SCI(1)III(2)IV(1) and megacomplex MCI(2)III(2)IV(2)). In response to mitochondrial stress, the precursor protein is ubiquitinated by the SIFI complex in the cytoplasm before mitochondrial import, leading to its degradation. Within the SIFI complex, UBR4 initiates ubiquitin chain that are further elongated or branched by KCMF1.

It is found in the mitochondrion inner membrane. Its pathway is energy metabolism; oxidative phosphorylation. In terms of biological role, component of the cytochrome c oxidase, the last enzyme in the mitochondrial electron transport chain which drives oxidative phosphorylation. The respiratory chain contains 3 multisubunit complexes succinate dehydrogenase (complex II, CII), ubiquinol-cytochrome c oxidoreductase (cytochrome b-c1 complex, complex III, CIII) and cytochrome c oxidase (complex IV, CIV), that cooperate to transfer electrons derived from NADH and succinate to molecular oxygen, creating an electrochemical gradient over the inner membrane that drives transmembrane transport and the ATP synthase. Cytochrome c oxidase is the component of the respiratory chain that catalyzes the reduction of oxygen to water. Electrons originating from reduced cytochrome c in the intermembrane space (IMS) are transferred via the dinuclear copper A center (CU(A)) of subunit 2 and heme A of subunit 1 to the active site in subunit 1, a binuclear center (BNC) formed by heme A3 and copper B (CU(B)). The BNC reduces molecular oxygen to 2 water molecules using 4 electrons from cytochrome c in the IMS and 4 protons from the mitochondrial matrix. The chain is Cytochrome c oxidase subunit 8A, mitochondrial (COX8A) from Macaca fascicularis (Crab-eating macaque).